A 380-amino-acid polypeptide reads, in one-letter code: Alkaline protease (380 aa).

Positions 1 to 27 (MKKPLGKIVASTALLISVAFSSSIASA) are cleaved as a signal peptide. The propeptide occupies 28-112 (AEEAKEKYLI…EEDAEVTTMA (85 aa)). Residues 34–111 (KYLIGFNEQE…IEEDAEVTTM (78 aa)) form the Inhibitor I9 domain. A Ca(2+)-binding site is contributed by Gln-113. One can recognise a Peptidase S8 domain in the interval 116–379 (PWGISRVQAP…SGLVNAEAAT (264 aa)). Catalysis depends on Asp-143, which acts as the Charge relay system. Residue Asp-151 participates in Ca(2+) binding. The active-site Charge relay system is His-173. Ca(2+)-binding residues include Leu-184, Asn-186, Ile-188, Val-190, Ala-274, Tyr-276, and Ala-279. The active-site Charge relay system is Ser-326.

The protein belongs to the peptidase S8 family. The cofactor is Ca(2+).

It is found in the secreted. The sequence is that of Alkaline protease from Alkalihalobacillus alcalophilus (Bacillus alcalophilus).